The chain runs to 379 residues: Probable leucine aminopeptidase ARB_01443 (379 aa).

Residues 1-18 (MKIATLAVVSAFAATAIA) form the signal peptide. The Zn(2+) site is built by H182 and D201. N-linked (GlcNAc...) asparagine glycans are attached at residues N202 and N226. Zn(2+) is bound by residues E240 and D267. A disulfide bridge connects residues C312 and C316. Zn(2+) is bound at residue H345.

This sequence belongs to the peptidase M28 family. M28E subfamily. As to quaternary structure, monomer. Zn(2+) is required as a cofactor.

It localises to the secreted. Its function is as follows. Probable extracellular aminopeptidase which contributes to pathogenicity. The sequence is that of Probable leucine aminopeptidase ARB_01443 from Arthroderma benhamiae (strain ATCC MYA-4681 / CBS 112371) (Trichophyton mentagrophytes).